The primary structure comprises 395 residues: ATP synthase subunit a (395 aa).

Helical transmembrane passes span 153-173 (FTNP…LVYF), 246-266 (HFLI…IVGF), 273-293 (FLSF…LVLL), 313-333 (MMAG…MLCM), and 339-359 (FIGD…ELGV).

Belongs to the ATPase A chain family. As to quaternary structure, F-type ATPases have 2 components, CF(1) - the catalytic core - and CF(0) - the membrane proton channel. CF(1) has five subunits: alpha(3), beta(3), gamma(1), delta(1), epsilon(1). CF(0) has three main subunits: a, b and c.

It localises to the mitochondrion inner membrane. In terms of biological role, mitochondrial membrane ATP synthase (F(1)F(0) ATP synthase or Complex V) produces ATP from ADP in the presence of a proton gradient across the membrane which is generated by electron transport complexes of the respiratory chain. F-type ATPases consist of two structural domains, F(1) - containing the extramembraneous catalytic core and F(0) - containing the membrane proton channel, linked together by a central stalk and a peripheral stalk. During catalysis, ATP synthesis in the catalytic domain of F(1) is coupled via a rotary mechanism of the central stalk subunits to proton translocation. Key component of the proton channel; it may play a direct role in the translocation of protons across the membrane. This Nicotiana tabacum (Common tobacco) protein is ATP synthase subunit a (ATP6).